The chain runs to 239 residues: MNKNIVIKSMAALAILTSATGINAAVVEETQQIANAEKNVTQVKDTNIFPYNGVVSFKDATGFVIGKNTIITNKHVSKDYKVGDRITAHPDGDKGNGGIYKIKSISDYPGDEDISVMNIEEQAVERGPKGFNFNENVQALNFAKDAKVDDKIKVIGYPLPAQNSFKQFESTGTIKRIKDNILNFDAYIEPGNSGSPVLNSNNEVIGVVYGGIGKIGSEYNGAVYFTPQIKDFIQKHIEQ.

Residues 1-36 (MNKNIVIKSMAALAILTSATGINAAVVEETQQIANA) form the signal peptide. Active-site charge relay system residues include H75, D113, and S193.

This sequence belongs to the peptidase S1B family.

It localises to the secreted. The chain is Serine protease SplC (splC) from Staphylococcus aureus (strain MSSA476).